Reading from the N-terminus, the 218-residue chain is Mitochondrial fission factor (218 aa).

Residues 1-198 (MAEISRIQYE…ENKERAKREM (198 aa)) lie on the Cytoplasmic side of the membrane. Residue T89 is modified to Phosphothreonine. 4 positions are modified to phosphoserine: S129, S131, S146, and S171. The stretch at 167–198 (VDAASLRRQIIKLNRRLQLLEEENKERAKREM) forms a coiled coil. Residues 199 to 216 (VMYSITVAFWLLNSWLWF) traverse the membrane as a helical; Anchor for type IV membrane protein segment. At 217–218 (RR) the chain is on the mitochondrial intermembrane side.

It belongs to the Tango11 family. Homodimer. Interacts with DNM1L. Interacts with C11orf65/MFI; the interaction inhibits MFF interaction with DNM1L.

It is found in the mitochondrion outer membrane. Its subcellular location is the peroxisome. The protein localises to the cytoplasmic vesicle. It localises to the secretory vesicle. The protein resides in the synaptic vesicle. Functionally, plays a role in mitochondrial and peroxisomal fission. Promotes the recruitment and association of the fission mediator dynamin-related protein 1 (DNM1L) to the mitochondrial surface. May be involved in regulation of synaptic vesicle membrane dynamics by recruitment of DNM1L to clathrin-containing vesicles. This Pongo abelii (Sumatran orangutan) protein is Mitochondrial fission factor (MFF).